A 254-amino-acid polypeptide reads, in one-letter code: 3-dehydroquinate dehydratase (254 aa).

Residues 47-49 (EWR) and arginine 83 each bind 3-dehydroquinate. Residue histidine 144 is the Proton donor/acceptor of the active site. Residue lysine 171 is the Schiff-base intermediate with substrate of the active site. 3 residues coordinate 3-dehydroquinate: arginine 214, serine 233, and glutamine 237.

It belongs to the type-I 3-dehydroquinase family. In terms of assembly, homodimer.

The catalysed reaction is 3-dehydroquinate = 3-dehydroshikimate + H2O. It participates in metabolic intermediate biosynthesis; chorismate biosynthesis; chorismate from D-erythrose 4-phosphate and phosphoenolpyruvate: step 3/7. Involved in the third step of the chorismate pathway, which leads to the biosynthesis of aromatic amino acids. Catalyzes the cis-dehydration of 3-dehydroquinate (DHQ) and introduces the first double bond of the aromatic ring to yield 3-dehydroshikimate. In Clostridium botulinum (strain Eklund 17B / Type B), this protein is 3-dehydroquinate dehydratase.